The sequence spans 652 residues: Protein phosphatase Slingshot homolog 3 (652 aa).

Polar residues predominate over residues 1–16; it reads MALVTVSRSPPASGHS. Positions 1–31 are disordered; it reads MALVTVSRSPPASGHSTPVGPTDRVIRRRGR. N-acetylalanine is present on Ala-2. Residues Ser-9, Ser-37, Ser-85, and Ser-87 each carry the phosphoserine modification. Residues 43–91 form a disordered region; that stretch reads GAVLGLQDGGEGNDAAEADPEPMEKPSGEEQPAEDQTDNGQGSQSPWKQ. Polar residues predominate over residues 80 to 90; the sequence is DNGQGSQSPWK. The DEK-C domain occupies 266–321; the sequence is EQMEQAILAELWQVLDASDLDSVTSKEIRQALELRLGCPLQQYRDFIDNQMLLLMA. Residues 325-466 enclose the Tyrosine-protein phosphatase domain; the sequence is RASRIFPHLY…LQTYQGILTA (142 aa). The active-site Phosphocysteine intermediate is the Cys-410. Disordered stretches follow at residues 484–526, 540–580, and 610–652; these read EPLA…LGLR, LLEP…KGGQ, and RAFQ…EGKA. Residues 540 to 552 show a composition bias toward low complexity; sequence LLEPSSEPESTTE. Basic and acidic residues predominate over residues 642 to 652; sequence SVDDSREEGKA.

This sequence belongs to the protein-tyrosine phosphatase family. In terms of assembly, does not bind to, or colocalize with, filamentous actin.

The protein resides in the cytoplasm. It is found in the cytoskeleton. Its subcellular location is the nucleus. The catalysed reaction is O-phospho-L-tyrosyl-[protein] + H2O = L-tyrosyl-[protein] + phosphate. It carries out the reaction O-phospho-L-seryl-[protein] + H2O = L-seryl-[protein] + phosphate. It catalyses the reaction O-phospho-L-threonyl-[protein] + H2O = L-threonyl-[protein] + phosphate. In terms of biological role, protein phosphatase which may play a role in the regulation of actin filament dynamics. Can dephosphorylate and activate the actin binding/depolymerizing factor cofilin, which subsequently binds to actin filaments and stimulates their disassembly. This is Protein phosphatase Slingshot homolog 3 (Ssh3) from Rattus norvegicus (Rat).